The primary structure comprises 300 residues: UDP-N-acetylenolpyruvoylglucosamine reductase (300 aa).

Positions 28 to 190 constitute an FAD-binding PCMH-type domain; it reads KIGGRVKYLV…TRAMMSFKKE (163 aa). Residue Arg169 is part of the active site. Ser219 (proton donor) is an active-site residue. Glu290 is an active-site residue.

The protein belongs to the MurB family. Requires FAD as cofactor.

The protein localises to the cytoplasm. It catalyses the reaction UDP-N-acetyl-alpha-D-muramate + NADP(+) = UDP-N-acetyl-3-O-(1-carboxyvinyl)-alpha-D-glucosamine + NADPH + H(+). It functions in the pathway cell wall biogenesis; peptidoglycan biosynthesis. Cell wall formation. This chain is UDP-N-acetylenolpyruvoylglucosamine reductase, found in Thermotoga sp. (strain RQ2).